The primary structure comprises 225 residues: UPF0173 metal-dependent hydrolase Pisl_0803 (225 aa).

This sequence belongs to the UPF0173 family.

The sequence is that of UPF0173 metal-dependent hydrolase Pisl_0803 from Pyrobaculum islandicum (strain DSM 4184 / JCM 9189 / GEO3).